Here is a 795-residue protein sequence, read N- to C-terminus: Phenylalanine--tRNA ligase beta subunit (795 aa).

The 110-residue stretch at 39–148 folds into the tRNA-binding domain; sequence AGSFHGVVVG…ADAPIGTDIR (110 aa). Positions 401–476 constitute a B5 domain; it reads PKRATITLRR…RVYGYNNIPD (76 aa). Mg(2+) contacts are provided by Asp-454, Asp-460, Glu-463, and Glu-464. The FDX-ACB domain occupies 701 to 794; that stretch reads SRFPANRRDI…LKERFQASLR (94 aa).

The protein belongs to the phenylalanyl-tRNA synthetase beta subunit family. Type 1 subfamily. In terms of assembly, tetramer of two alpha and two beta subunits. Mg(2+) is required as a cofactor.

It is found in the cytoplasm. It catalyses the reaction tRNA(Phe) + L-phenylalanine + ATP = L-phenylalanyl-tRNA(Phe) + AMP + diphosphate + H(+). The polypeptide is Phenylalanine--tRNA ligase beta subunit (Shigella sonnei (strain Ss046)).